The sequence spans 88 residues: Cytochrome c oxidase subunit 6B2 (88 aa).

One can recognise a CHCH domain in the interval 29-75; it reads TRNCYQNFLDYHRCIKTMNRRGKSTQPCEYYFRVYHSLCPISWVQRW. Positions 32–42 match the Cx9C motif motif; it reads CYQNFLDYHRC. 2 disulfide bridges follow: cysteine 32/cysteine 67 and cysteine 42/cysteine 56. The short motif at 56 to 67 is the Cx10C motif element; that stretch reads CEYYFRVYHSLC.

Belongs to the cytochrome c oxidase subunit 6B family. In terms of assembly, component of the cytochrome c oxidase (complex IV, CIV), a multisubunit enzyme composed of 14 subunits. The complex is composed of a catalytic core of 3 subunits MT-CO1, MT-CO2 and MT-CO3, encoded in the mitochondrial DNA, and 11 supernumerary subunits COX4I1 (or COX4I2), COX5A, COX5B, COX6A2 (or COX6A1), COX6B1 (or COX6B2), COX6C, COX7A1 (or COX7A2), COX7B, COX7C, COX8B and NDUFA4, which are encoded in the nuclear genome. The complex exists as a monomer or a dimer and forms supercomplexes (SCs) in the inner mitochondrial membrane with NADH-ubiquinone oxidoreductase (complex I, CI) and ubiquinol-cytochrome c oxidoreductase (cytochrome b-c1 complex, complex III, CIII), resulting in different assemblies (supercomplex SCI(1)III(2)IV(1) and megacomplex MCI(2)III(2)IV(2)). In terms of tissue distribution, testis specific.

The protein resides in the mitochondrion inner membrane. Its pathway is energy metabolism; oxidative phosphorylation. In terms of biological role, component of the cytochrome c oxidase, the last enzyme in the mitochondrial electron transport chain which drives oxidative phosphorylation. The respiratory chain contains 3 multisubunit complexes succinate dehydrogenase (complex II, CII), ubiquinol-cytochrome c oxidoreductase (cytochrome b-c1 complex, complex III, CIII) and cytochrome c oxidase (complex IV, CIV), that cooperate to transfer electrons derived from NADH and succinate to molecular oxygen, creating an electrochemical gradient over the inner membrane that drives transmembrane transport and the ATP synthase. Cytochrome c oxidase is the component of the respiratory chain that catalyzes the reduction of oxygen to water. Electrons originating from reduced cytochrome c in the intermembrane space (IMS) are transferred via the dinuclear copper A center (CU(A)) of subunit 2 and heme A of subunit 1 to the active site in subunit 1, a binuclear center (BNC) formed by heme A3 and copper B (CU(B)). The BNC reduces molecular oxygen to 2 water molecules using 4 electrons from cytochrome c in the IMS and 4 protons from the mitochondrial matrix. The polypeptide is Cytochrome c oxidase subunit 6B2 (COX6B2) (Bos taurus (Bovine)).